Here is a 108-residue protein sequence, read N- to C-terminus: Large ribosomal subunit protein bL21 (108 aa).

The protein belongs to the bacterial ribosomal protein bL21 family. As to quaternary structure, part of the 50S ribosomal subunit. Contacts protein L20.

Functionally, this protein binds to 23S rRNA in the presence of protein L20. In Acidobacterium capsulatum (strain ATCC 51196 / DSM 11244 / BCRC 80197 / JCM 7670 / NBRC 15755 / NCIMB 13165 / 161), this protein is Large ribosomal subunit protein bL21.